A 632-amino-acid chain; its full sequence is Chaperone protein HtpG (632 aa).

The interval 1–339 is a; substrate-binding; the sequence is MTQQTMSFQA…SSDLPLNVSR (339 aa). The interval 340-559 is b; that stretch reads EILQESRDVK…DNDMSGYLQR (220 aa). The interval 560–632 is c; that stretch reads MLKAAGQNAP…TNALLLSRAA (73 aa).

This sequence belongs to the heat shock protein 90 family. As to quaternary structure, homodimer.

The protein localises to the cytoplasm. Its function is as follows. Molecular chaperone. Has ATPase activity. This Burkholderia thailandensis (strain ATCC 700388 / DSM 13276 / CCUG 48851 / CIP 106301 / E264) protein is Chaperone protein HtpG.